The following is a 115-amino-acid chain: NADH-ubiquinone oxidoreductase chain 3 (115 aa).

Helical transmembrane passes span 3-23 (VMLA…IAFW), 55-75 (FFLV…LLPL), and 84-104 (LPTM…SLAY).

This sequence belongs to the complex I subunit 3 family. Core subunit of respiratory chain NADH dehydrogenase (Complex I) which is composed of 45 different subunits. Interacts with TMEM186. Interacts with TMEM242.

The protein localises to the mitochondrion inner membrane. It catalyses the reaction a ubiquinone + NADH + 5 H(+)(in) = a ubiquinol + NAD(+) + 4 H(+)(out). Core subunit of the mitochondrial membrane respiratory chain NADH dehydrogenase (Complex I) which catalyzes electron transfer from NADH through the respiratory chain, using ubiquinone as an electron acceptor. Essential for the catalytic activity of complex I. The sequence is that of NADH-ubiquinone oxidoreductase chain 3 from Felis catus (Cat).